The chain runs to 380 residues: Queuine tRNA-ribosyltransferase (380 aa).

D95 serves as the catalytic Proton acceptor. Residues 95 to 99, D149, Q192, and G219 each bind substrate; that span reads DSGGF. Residues 250 to 256 form an RNA binding region; that stretch reads GVGSPDS. D269 functions as the Nucleophile in the catalytic mechanism. An RNA binding; important for wobble base 34 recognition region spans residues 274–278; sequence TRIGR. C307, C309, C312, and H338 together coordinate Zn(2+).

This sequence belongs to the queuine tRNA-ribosyltransferase family. Homodimer. Within each dimer, one monomer is responsible for RNA recognition and catalysis, while the other monomer binds to the replacement base PreQ1. Requires Zn(2+) as cofactor.

The enzyme catalyses 7-aminomethyl-7-carbaguanine + guanosine(34) in tRNA = 7-aminomethyl-7-carbaguanosine(34) in tRNA + guanine. It functions in the pathway tRNA modification; tRNA-queuosine biosynthesis. Functionally, catalyzes the base-exchange of a guanine (G) residue with the queuine precursor 7-aminomethyl-7-deazaguanine (PreQ1) at position 34 (anticodon wobble position) in tRNAs with GU(N) anticodons (tRNA-Asp, -Asn, -His and -Tyr). Catalysis occurs through a double-displacement mechanism. The nucleophile active site attacks the C1' of nucleotide 34 to detach the guanine base from the RNA, forming a covalent enzyme-RNA intermediate. The proton acceptor active site deprotonates the incoming PreQ1, allowing a nucleophilic attack on the C1' of the ribose to form the product. After dissociation, two additional enzymatic reactions on the tRNA convert PreQ1 to queuine (Q), resulting in the hypermodified nucleoside queuosine (7-(((4,5-cis-dihydroxy-2-cyclopenten-1-yl)amino)methyl)-7-deazaguanosine). This chain is Queuine tRNA-ribosyltransferase, found in Geobacillus kaustophilus (strain HTA426).